The chain runs to 707 residues: MSDTTDLMGARVEETAAAPATDASAPATGAGSRRRRGTGLEGMVLAELQQVASGLGIRGTARMRKSQLIEVIKEAQAAGGAPAKAAPAAADTAGETKPKRRSTSRTRTGDEAPAEKAEKAGKADKKADKAAADKAAAQQQIEIPGQPTPKVNASAEQAAPADDAPSERRRRRATSDAGSPSATDTTVAVETRAEPKADTSAPQQSQGHQQGQGDARSDAEGGDGRRRDRRDRGDRDRGDRGDRGDRGDRGDRGERGRDRRNKGDDQQNQGGGRQDRQQQGGGGRQDRQQHDDGYDDDGSGRRGRRGRYRDRRGRRGRDEIQEPQINEDDVLIPVAGILDILDNYAFIRTSGYLPGPNDVYVSLAQVRKNGLRKGDHLTGAVRQPKEGERREKFNALVRLDSVNGMAPEHGRGRPEFNKLTPLYPQDRLRLETDPGVLTTRIIDLVAPIGKGQRGLIVAPPKTGKTMIMQAIANAITHNNPECHLMVVLVDERPEEVTDMQRSVKGEVISSTFDRPAEDHTTVAELAIERAKRLVELGHDVVVLLDSITRLGRAYNLAAPASGRILSGGVDSTALYPPKRFFGAARNIEDGGSLTILATALVDTGSRMDEVIFEEFKGTGNAELKLDRKLADKRIFPAVDVDASGTRKEEILLGSDELAITWKLRRVLHALDQQQAIELLLDKMKQTKSNAEFLIQIQKTTPTPGNGD.

Disordered stretches follow at residues 1–38 (MSDT…RRGT) and 76–321 (QAAG…DEIQ). Composition is skewed to low complexity over residues 16–31 (AAAP…TGAG) and 76–93 (QAAG…ADTA). Residues 107–132 (RTGDEAPAEKAEKAGKADKKADKAAA) show a composition bias toward basic and acidic residues. Over residues 153-163 (ASAEQAAPADD) the composition is skewed to low complexity. A compositionally biased stretch (polar residues) spans 176–188 (DAGSPSATDTTVA). The span at 203–213 (QQSQGHQQGQG) shows a compositional bias: low complexity. The span at 215 to 265 (ARSDAEGGDGRRRDRRDRGDRDRGDRGDRGDRGDRGDRGERGRDRRNKGDD) shows a compositional bias: basic and acidic residues. Basic residues predominate over residues 301 to 315 (RRGRRGRYRDRRGRR). In terms of domain architecture, Rho RNA-BD spans 331–406 (LIPVAGILDI…VRLDSVNGMA (76 aa)). ATP is bound by residues 449 to 454 (GKGQRG), 461 to 466 (KTGKTM), and Arg492.

The protein belongs to the Rho family. Homohexamer. The homohexamer assembles into an open ring structure.

Its function is as follows. Facilitates transcription termination by a mechanism that involves Rho binding to the nascent RNA, activation of Rho's RNA-dependent ATPase activity, and release of the mRNA from the DNA template. In Streptomyces lividans, this protein is Transcription termination factor Rho.